The primary structure comprises 7094 residues: Replicase polyprotein 1ab (7094 aa).

One can recognise a CoV Nsp1 globular domain in the interval 54-196 (PENHVMVDCR…PWVMYLRKCG (143 aa)). The 31-residue stretch at 216–246 (FKVEDAYDLVHDEPKGKFSKKAYALIRGYRG) folds into the BetaCoV Nsp1 C-terminal domain. One can recognise a CoV Nsp2 N-terminal domain in the interval 250-519 (LLYVDQYGCD…LICKALYLDY (270 aa)). The Zn(2+) site is built by Cys-392, Cys-397, Cys-413, and Cys-416. A C4 region spans residues 392-416 (CEQDLCDFKGWVPGNMIDGFACTTC). Residues 524-713 (CGNLHQRELL…AQAFRSVAKV (190 aa)) form the CoV Nsp2 middle domain. The CoV Nsp2 C-terminal domain occupies 733–851 (RRRICLSGSK…LDQAWRVPCA (119 aa)). The Ubiquitin-like 1 domain maps to 853-966 (RRVTFKEQPT…LYCAFTAPED (114 aa)). The 239-residue stretch at 1036-1274 (DLESVIQDYE…IAQLYGSCIT (239 aa)) folds into the Peptidase C16 1 domain. Residue Cys-1074 is the For PL1-PRO activity of the active site. Residues Cys-1151, Cys-1154, Cys-1177, and Cys-1179 each coordinate Zn(2+). Residues 1151 to 1179 (CIKCDLALKLKGLDAMFFYGDVVSHVCKC) form a C4-type 1 zinc finger. Active-site for PL1-PRO activity residues include His-1225 and Asp-1236. The Macro domain occupies 1275–1435 (PNVCFVKGDI…LISKCQITAV (161 aa)). The DPUP domain occupies 1491–1563 (DDARTFVQSN…VAQIKALFLD (73 aa)). The region spanning 1562–1617 (LDKVDILLTVDGVNFTNRFVPVGENFGKSLGNVFCDGVNVTKHKCDINYKGKVFFQ) is the Ubiquitin-like 2 domain. Positions 1631-1892 (SSFNFDQKEL…KIEYKPDLSQ (262 aa)) constitute a Peptidase C16 2 domain. The For PL2-PRO activity role is filled by Cys-1671. Cys-1749, Cys-1751, Cys-1783, and Cys-1785 together coordinate Zn(2+). The C4-type 2 zinc finger occupies 1749–1785 (CKCGVKQEQRTGVDAVMHFGTLSREDLEIGYTVDCSC). Catalysis depends on for PL2-PRO activity residues His-1828 and Asp-1842. The Nucleic acid-binding domain occupies 1906–2007 (IKAQFKTFEK…TYFNRPLLVD (102 aa)). Residues 2020 to 2169 (DDGGDISESD…ADNKVIYTTE (150 aa)) enclose the G2M domain. 3 helical membrane passes run 2138 to 2158 (ISAC…WIKI), 2199 to 2219 (ACII…NVIF), and 2227 to 2247 (IGFL…TFSL). The tract at residues 2138 to 2385 (ISACFNFIKW…ASFIKLFSLF (248 aa)) is HD1. The 62-residue stretch at 2235–2296 (GKIAQWIKST…AIDVVQYEAD (62 aa)) folds into the 3Ecto domain. Intrachain disulfides connect Cys-2251–Cys-2275 and Cys-2266–Cys-2272. 3 helical membrane passes run 2313 to 2333 (LIVS…LISI), 2343 to 2363 (LFML…ANML), and 2365 to 2385 (AHVF…FSLF). The tract at residues 2383 to 2473 (SLFRHVAYGC…ELKRPIQPTD (91 aa)) is Y1. One can recognise a CoV Nsp3 Y domain in the interval 2383–2750 (SLFRHVAYGC…LTTPFSLKGG (368 aa)). The Zn(2+) site is built by His-2387, Cys-2392, Cys-2397, Cys-2400, Cys-2433, His-2436, Cys-2440, and Cys-2443. The ZF1 stretch occupies residues 2387-2400 (HVAYGCSKPGCLFC). A ZF2 region spans residues 2433 to 2443 (CSKHQWNCIDC). The tract at residues 2474 to 2566 (VAYHTVTDVK…MVDKNLITTA (93 aa)) is Y2. The tract at residues 2474–2750 (VAYHTVTDVK…LTTPFSLKGG (277 aa)) is coV-Y. Positions 2567-2649 (NTGTSVTETM…DSVMSAVSAG (83 aa)) are Y3. The interval 2650–2750 (LELTDESCNN…LTTPFSLKGG (101 aa)) is Y4. A run of 7 helical transmembrane segments spans residues 2752-2772 (VFSY…IGLW), 2824-2844 (STFG…VAVV), 3009-3029 (VFDL…FLAL), 3031-3051 (ASSI…YYLI), 3063-3083 (IVFV…VFQV), 3090-3110 (VYAI…SVIM), and 3115-3135 (LVMY…SVVV). An HD2 region spans residues 2752 to 3135 (VFSYFVYVCF…FCLLYISVVV (384 aa)). The Nsp4C domain maps to 3149–3246 (LGTSVRSDGT…TASVSTSFLQ (98 aa)). Residues 3247–3549 (SGIVKMVNPT…YQQLAGIKLQ (303 aa)) enclose the Peptidase C30 domain. Catalysis depends on for 3CL-PRO activity residues His-3287 and Cys-3391. Helical transmembrane passes span 3558 to 3578 (GIVC…TAFV), 3588 to 3608 (TNML…MLLV), 3614 to 3634 (YLTM…YLVV), 3657 to 3677 (TYTD…FVTL), 3684 to 3704 (LFSF…WYMG), 3711 to 3731 (ILLM…LSMA), and 3755 to 3775 (IVLV…GLFS). The HD3 stretch occupies residues 3558–3775 (GIVCWIMAST…IISCYWGLFS (218 aa)). In terms of domain architecture, RdRp Nsp7 cofactor spans 3837–3925 (SKLTDVKCAN…DYAKDNTVLQ (89 aa)). One can recognise a RdRp Nsp8 cofactor domain in the interval 3926 to 4122 (ALQSEFVNMA…HNEVSATVLQ (197 aa)). One can recognise a Nsp9 ssRNA-binding domain in the interval 4123-4232 (NNELMPAKLK…GTISSTVRLQ (110 aa)). The 138-residue stretch at 4233-4370 (AGTATEYASN…CVSTDTTVQS (138 aa)) folds into the ExoN/MTase coactivator domain. The Zn(2+) site is built by Cys-4306, Cys-4309, His-4315, Cys-4322, Cys-4348, Cys-4351, Cys-4359, and Cys-4361. 2 zinc fingers span residues 4306 to 4322 (CIYC…DGLC) and 4348 to 4361 (CQVC…SCSC). The NiRAN domain maps to 4375-4630 (FLNRVRGTSV…DCELYVNNAY (256 aa)). Mn(2+)-binding residues include Asn-4578 and Asp-4587. Residues 4631 to 4729 (RLFDLVQYDF…MNMDVDTHRY (99 aa)) enclose the Nsp12 Interface domain. Zn(2+) is bound by residues His-4660, Cys-4666, Cys-4671, Cys-4675, and Cys-4852. The Nsp12 RNA-dependent RNA polymerase domain occupies 4730–5297 (RLSLKDLLLY…NMYLRSAVMQ (568 aa)). A rdRp Fingers N-ter region spans residues 4732 to 4946 (SLKDLLLYAA…HQKCLKSIAA (215 aa)). The rdRp Palm N-ter stretch occupies residues 4947–4985 (TRGVPVVIGTTKFYGGWDDMLRRLIKDVDNPVLMGWDYP). In terms of domain architecture, RdRp catalytic spans 4977-5139 (PVLMGWDYPK…CYNSDYASKG (163 aa)). The segment at 4986-5044 (KCDRAMPNILRIVSSLVLARKHEACCSQSDRFYRLANECAQVLSEIVMCGGCYYVKPGG) is rdRp Fingers C-ter. Residues His-5007, Cys-5010, and Cys-5011 each contribute to the Zn(2+) site. The rdRp Palm C-ter stretch occupies residues 5045 to 5180 (TSSGDATTAF…NNGPHEFCSQ (136 aa)). Residues Ser-5124, Asp-5125, and Asp-5126 contribute to the active site. Positions 5181–5297 (HTMLVKMDGD…NMYLRSAVMQ (117 aa)) are rdRp Thumb. A CV ZBD domain is found at 5298 to 5410 (SVGACVVCSS…DDFNRIASCK (113 aa)). Zn(2+) is bound by residues Cys-5302, Cys-5305, Cys-5313, Cys-5316, Cys-5323, Cys-5326, His-5330, His-5336, Cys-5347, Cys-5352, Cys-5369, and His-5372. The (+)RNA virus helicase ATP-binding domain occupies 5553–5734 (SVLETFQNNV…MCCLGPDIFL (182 aa)). 5578–5585 (GPPGTGKS) provides a ligand contact to ATP. The (+)RNA virus helicase C-terminal domain maps to 5735–5904 (GTCYRCPKEI…VETRVQCSTN (170 aa)). One can recognise an ExoN domain in the interval 5971–6186 (LFITKEEAVK…RCLAVYDCFC (216 aa)). Active-site residues include Asp-5989, Glu-5991, and Glu-6090. 7 residues coordinate Zn(2+): Cys-6106, Cys-6109, Cys-6125, His-6128, His-6156, Cys-6160, and His-6163. Catalysis depends on residues His-6167 and Asp-6172. Zn(2+) is bound at residue Cys-6178. The N7-MTase domain occupies 6195-6421 (YPIISNELSI…NLWNTFTKLQ (227 aa)). 6230-6236 (DIGNPKA) is an S-adenosyl-L-methionine binding site. The interval 6308-6322 (CNGGSLYVNKHAFHT) is gpppA-binding. Positions 6346, 6367, 6378, and 6381 each coordinate Zn(2+). Positions 6422–6482 (SLENVVYNLV…NVAVELFAKR (61 aa)) constitute a Nsp15 N-terminal oligomerization domain. The 121-residue stretch at 6483–6603 (SIRHHPELKL…FAVRKEGQDV (121 aa)) folds into the AV-Nsp11N/CoV-Nsp15M domain. The region spanning 6653–6792 (TCRTDMEKDF…NDEKVMTFYP (140 aa)) is the NendoU domain. Residues His-6683, His-6698, Lys-6738, Lys-6841, Asp-6925, Lys-6965, and Glu-6998 contribute to the active site. The region spanning 6797-7091 (ASDWKPGYSM…KEVFVGDSLV (295 aa)) is the Nidovirus-type SAM-dependent 2'-O-MTase domain.

It belongs to the coronaviruses polyprotein 1ab family. In terms of assembly, interacts with host PHB and PHB2. Interacts with papain-like protease nsp3 and non-structural protein 6. As to quaternary structure, monomer. Homodimer. Only the homodimer shows catalytic activity. In terms of assembly, interacts with nsp8 and nsp12 to form the replication-transcription complex (RTC): nsp12, nsp7, two subunits of nsp8, and up to two subunits of nsp13. Interacts with nsp7, nsp13 and nsp12 to form the replication-transcription complex (RTC): nsp12, nsp7, two subunits of nsp8, and up to two subunits of nsp13. As to quaternary structure, interacts with nsp12. In terms of assembly, interacts with proofreading exoribonuclease nsp14 and 2'-O-methyltransferase nsp16; these interactions enhance nsp14 and nsp16 enzymatic activities. Interacts with nsp7 and nsp8 to form the replication-transcription complex (RTC): nsp12, nsp7, two subunits of nsp8, and up to two subunits of nsp13. Interacts with nsp9. As to quaternary structure, interacts with nsp8 to form the replication-transcription complex (RTC): nsp12, nsp7, two subunits of nsp8, and up to two subunits of nsp13. Requires Mn(2+) as cofactor. Mg(2+) serves as cofactor. Post-translationally, specific enzymatic cleavages in vivo by its own proteases yield mature proteins. 3CL-PRO and PL-PRO proteinases are autocatalytically processed.

The protein localises to the host membrane. It is found in the host cytoplasm. It localises to the host perinuclear region. The protein resides in the host endoplasmic reticulum-Golgi intermediate compartment. The enzyme catalyses RNA(n) + a ribonucleoside 5'-triphosphate = RNA(n+1) + diphosphate. The catalysed reaction is ATP + H2O = ADP + phosphate + H(+). It carries out the reaction Thiol-dependent hydrolysis of ester, thioester, amide, peptide and isopeptide bonds formed by the C-terminal Gly of ubiquitin (a 76-residue protein attached to proteins as an intracellular targeting signal).. It catalyses the reaction a 5'-end (N(7)-methyl 5'-triphosphoguanosine)-ribonucleoside in mRNA + S-adenosyl-L-methionine = a 5'-end (N(7)-methyl 5'-triphosphoguanosine)-(2'-O-methyl-ribonucleoside) in mRNA + S-adenosyl-L-homocysteine + H(+). The enzyme catalyses uridylyl-uridylyl-ribonucleotide-RNA = a 3'-end uridylyl-2',3'-cyclophospho-uridine-RNA + a 5'-end dephospho-ribonucleoside-RNA. The catalysed reaction is a 5'-end diphospho-ribonucleoside in mRNA + GTP + H(+) = a 5'-end (5'-triphosphoguanosine)-ribonucleoside in mRNA + diphosphate. It carries out the reaction a 5'-end (5'-triphosphoguanosine)-ribonucleoside in mRNA + S-adenosyl-L-methionine = a 5'-end (N(7)-methyl 5'-triphosphoguanosine)-ribonucleoside in mRNA + S-adenosyl-L-homocysteine. The replicase polyprotein of coronaviruses is a multifunctional protein: it contains the activities necessary for the transcription of negative stranded RNA, leader RNA, subgenomic mRNAs and progeny virion RNA as well as proteinases responsible for the cleavage of the polyprotein into functional products. In terms of biological role, inhibits host translation by interacting with the 40S ribosomal subunit. The nsp1-40S ribosome complex further induces an endonucleolytic cleavage near the 5'UTR of host mRNAs, targeting them for degradation. Viral mRNAs are not susceptible to nsp1-mediated endonucleolytic RNA cleavage thanks to the presence of a 5'-end leader sequence and are therefore protected from degradation. By suppressing host gene expression, nsp1 facilitates efficient viral gene expression in infected cells and evasion from host immune response. Its function is as follows. May play a role in the modulation of host cell survival signaling pathway by interacting with host PHB and PHB2. Indeed, these two proteins play a role in maintaining the functional integrity of the mitochondria and protecting cells from various stresses. Functionally, responsible for the cleavages located at the N-terminus of the replicase polyprotein. In addition, PL-PRO possesses a deubiquitinating/deISGylating activity and processes both 'Lys-48'- and 'Lys-63'-linked polyubiquitin chains from cellular substrates. Participates together with nsp4 in the assembly of virally-induced cytoplasmic double-membrane vesicles necessary for viral replication. Antagonizes innate immune induction of type I interferon by blocking the phosphorylation, dimerization and subsequent nuclear translocation of host IRF3. Also prevents host NF-kappa-B signaling. Participates in the assembly of virally-induced cytoplasmic double-membrane vesicles necessary for viral replication. In terms of biological role, cleaves the C-terminus of replicase polyprotein at 11 sites. Recognizes substrates containing the core sequence [ILMVF]-Q-|-[SGACN]. Also able to bind an ADP-ribose-1''-phosphate (ADRP). Its function is as follows. Plays a role in the initial induction of autophagosomes from host endoplasmic reticulum. Later, limits the expansion of these phagosomes that are no longer able to deliver viral components to lysosomes. Functionally, forms a hexadecamer with nsp8 (8 subunits of each) that may participate in viral replication by acting as a primase. Alternatively, may synthesize substantially longer products than oligonucleotide primers. Forms a hexadecamer with nsp7 (8 subunits of each) that may participate in viral replication by acting as a primase. Alternatively, may synthesize substantially longer products than oligonucleotide primers. In terms of biological role, forms a primer, NSP9-pU, which is utilized by the polymerase for the initiation of RNA chains. Interacts with ribosome signal recognition particle RNA (SRP). Together with NSP8, suppress protein integration into the cell membrane, thereby disrupting host immune defenses. Its function is as follows. Plays a pivotal role in viral transcription by stimulating both nsp14 3'-5' exoribonuclease and nsp16 2'-O-methyltransferase activities. Therefore plays an essential role in viral mRNAs cap methylation. Functionally, RNA-directed RNA polymerase that catalyzes the transcription of viral genomic and subgenomic RNAs. Acts in complex with nsp7 and nsp8 to transcribe both the minus and positive strands of genomic RNA. The kinase-like NiRAN domain of NSP12 attaches one or more nucleotides to the amino terminus of NSP9, forming a covalent RNA-protein intermediate that serves as transcription/replication primer. Subgenomic RNAs (sgRNAs) are formed by discontinuous transcription: The polymerase has the ability to pause at transcription-regulating sequences (TRS) and jump to the leader TRS, resulting in a major deletion. This creates a series of subgenomic RNAs that are replicated, transcribed and translated. In addition, Nsp12 is a subunit of the viral RNA capping enzyme that catalyzes the RNA guanylyltransferase reaction for genomic and sub-genomic RNAs. Subsequently, the NiRAN domain transfers RNA to GDP, and forms the core cap structure GpppA-RNA. Multi-functional protein with a zinc-binding domain in N-terminus displaying RNA and DNA duplex-unwinding activities with 5' to 3' polarity. Activity of helicase is dependent on magnesium. In terms of biological role, plays a role in viral RNA synthesis through two distinct activities. The N7-guanine methyltransferase activity plays a role in the formation of the cap structure GpppA-RNA. The proofreading exoribonuclease reduces the sensitivity of the virus to RNA mutagens during replication. This activity acts on both ssRNA and dsRNA in a 3'-5' direction. Its function is as follows. Plays a role in viral transcription/replication and prevents the simultaneous activation of host cell dsRNA sensors, such as MDA5/IFIH1, OAS, and PKR. Acts by degrading the 5'-polyuridines generated during replication of the poly(A) region of viral genomic and subgenomic RNAs. Catalyzes a two-step reaction in which a 2'3'-cyclic phosphate (2'3'-cP) is first generated by 2'-O transesterification, which is then hydrolyzed to a 3'-phosphate (3'-P). If not degraded, poly(U) RNA would hybridize with poly(A) RNA tails and activate host dsRNA sensors. Functionally, methyltransferase that mediates mRNA cap 2'-O-ribose methylation to the 5'-cap structure of viral mRNAs. N7-methyl guanosine cap is a prerequisite for binding of nsp16. Therefore plays an essential role in viral mRNAs cap methylation which is essential to evade immune system. This chain is Replicase polyprotein 1ab (rep), found in Bos taurus (Bovine).